A 288-amino-acid chain; its full sequence is Glucose-1-phosphate thymidylyltransferase (288 aa).

Gly8 contributes to the dTDP-alpha-D-glucose binding site. The dTTP site is built by Gly8, Gly11, Thr12, Arg13, Lys23, Gln24, Gln80, Gly85, and Asp108. Residues Lys23, Gln24, Gln80, Gly85, Asp108, Asn109, Gly143, Glu158, Lys159, Val169, and Asp222 each coordinate dTDP-alpha-D-glucose. Mg(2+) is bound at residue Asp108. Asp222 contacts Mg(2+).

Belongs to the glucose-1-phosphate thymidylyltransferase family. The cofactor is Mg(2+).

The catalysed reaction is dTTP + alpha-D-glucose 1-phosphate + H(+) = dTDP-alpha-D-glucose + diphosphate. It functions in the pathway carbohydrate biosynthesis; dTDP-L-rhamnose biosynthesis. In terms of biological role, catalyzes the conversion of glucose-1-phosphate and dTTP to dTDP-glucose and pyrophosphate. Involved in the biosynthesis of the dTDP-L-rhamnose which is a component of the critical linker, D-N-acetylglucosamine-L-rhamnose disaccharide, which connects the galactan region of arabinogalactan to peptidoglycan via a phosphodiester linkage. This Mycolicibacterium smegmatis (strain ATCC 700084 / mc(2)155) (Mycobacterium smegmatis) protein is Glucose-1-phosphate thymidylyltransferase (rmlA).